The primary structure comprises 458 residues: Lysine-rich nucleolar protein 1 (458 aa).

The segment covering 1-14 (MITKTHKVDLGLPE) has biased composition (basic and acidic residues). Positions 1-21 (MITKTHKVDLGLPEKKKKKKV) are disordered. A Glycyl lysine isopeptide (Lys-Gly) (interchain with G-Cter in SUMO2) cross-link involves residue Lys7. Ser42 and Ser50 each carry phosphoserine. Residues 46–305 (ATSPSKSVAH…ESGVAGDPWK (260 aa)) are disordered. Positions 64 to 73 (VKKKKKKKKG) are enriched in basic residues. Lys101 is covalently cross-linked (Glycyl lysine isopeptide (Lys-Gly) (interchain with G-Cter in SUMO2)). Ser111 carries the post-translational modification Phosphoserine. Lys130 participates in a covalent cross-link: Glycyl lysine isopeptide (Lys-Gly) (interchain with G-Cter in SUMO2). The residue at position 132 (Ser132) is a Phosphoserine. Over residues 145–155 (GKKLKKHKKEK) the composition is skewed to basic residues. Over residues 173–192 (EAREARDVGDTCSVGKKDEE) the composition is skewed to basic and acidic residues. Residues 198–218 (QKRKRKSPREHNGKVKKKKKI) show a composition bias toward basic residues. Residue Lys249 forms a Glycyl lysine isopeptide (Lys-Gly) (interchain with G-Cter in SUMO1); alternate linkage. Lys249 is covalently cross-linked (Glycyl lysine isopeptide (Lys-Gly) (interchain with G-Cter in SUMO2); alternate). Ser265 carries the post-translational modification Phosphoserine. The segment covering 265 to 274 (SAKKKMKSKK) has biased composition (basic residues). Glycyl lysine isopeptide (Lys-Gly) (interchain with G-Cter in SUMO2) cross-links involve residues Lys275, Lys287, and Lys305. An interaction with ZNF106 region spans residues 306–458 (EETDTDLEVV…NASKSVKLED (153 aa)). A phosphothreonine mark is found at Thr308 and Thr310. Glycyl lysine isopeptide (Lys-Gly) (interchain with G-Cter in SUMO2) cross-links involve residues Lys319, Lys353, Lys373, Lys375, and Lys407. A compositionally biased stretch (basic and acidic residues) spans 336-353 (QEEIDRESGKTEASETRK). Positions 336 to 355 (QEEIDRESGKTEASETRKWT) are disordered. Arg430 is modified (omega-N-methylarginine). Lys442 participates in a covalent cross-link: Glycyl lysine isopeptide (Lys-Gly) (interchain with G-Cter in SUMO2).

In terms of assembly, interacts with ZNF106.

The protein localises to the nucleus. Its subcellular location is the nucleolus. The protein is Lysine-rich nucleolar protein 1 (KNOP1) of Homo sapiens (Human).